The following is a 75-amino-acid chain: Putative primary metabolism protein HVA1 (75 aa).

A compositionally biased stretch (polar residues) spans 1-13 (MSVQDKQGQNINV). Disordered regions lie at residues 1 to 24 (MSVQ…YRGG) and 40 to 75 (AAEK…DKQK).

In terms of biological role, may play a role in primary metabolism. The protein is Putative primary metabolism protein HVA1 of Cryptococcus neoformans var. grubii serotype A (strain H99 / ATCC 208821 / CBS 10515 / FGSC 9487) (Filobasidiella neoformans var. grubii).